Reading from the N-terminus, the 173-residue chain is Ribosome maturation factor RimM (173 aa).

The region spanning 102–173 (EGEYYWSDLI…TMLVDWDPEF (72 aa)) is the PRC barrel domain.

This sequence belongs to the RimM family. Binds ribosomal protein uS19.

Its subcellular location is the cytoplasm. Functionally, an accessory protein needed during the final step in the assembly of 30S ribosomal subunit, possibly for assembly of the head region. Essential for efficient processing of 16S rRNA. May be needed both before and after RbfA during the maturation of 16S rRNA. It has affinity for free ribosomal 30S subunits but not for 70S ribosomes. This Methylobacillus flagellatus (strain ATCC 51484 / DSM 6875 / VKM B-1610 / KT) protein is Ribosome maturation factor RimM.